Reading from the N-terminus, the 621-residue chain is Chaperone protein HscA homolog (621 aa).

The protein belongs to the heat shock protein 70 family.

Functionally, chaperone involved in the maturation of iron-sulfur cluster-containing proteins. Has a low intrinsic ATPase activity which is markedly stimulated by HscB. In Polynucleobacter necessarius subsp. necessarius (strain STIR1), this protein is Chaperone protein HscA homolog.